The sequence spans 387 residues: ADP,ATP carrier protein 2, mitochondrial (387 aa).

The N-terminal 77 residues, 1–77 (MADQANQPTV…PVMPTPLFAN (77 aa)), are a transit peptide targeting the mitochondrion. Solcar repeat units lie at residues 85-178 (KNFM…FKRL), 190-282 (KWFA…IKPV), and 290-376 (DNFF…LQIL). Helical transmembrane passes span 87–114 (FMID…VKLL), 155–179 (TANV…KRLF), 188–208 (YWKW…SSLF), 258–279 (FNIS…YDSI), and 293–313 (FASF…SYPI). The ADP site is built by R160 and K172. R317 provides a ligand contact to ADP. Residues 317 to 322 (RRRMMM) form an important for transport activity region. A Nucleotide carrier signature motif motif is present at residues 317 to 322 (RRRMMM). A helical transmembrane segment spans residues 353–373 (AGANILRAIAGAGVLSGYDQL).

The protein belongs to the mitochondrial carrier (TC 2.A.29) family. As to quaternary structure, monomer.

Its subcellular location is the mitochondrion inner membrane. The catalysed reaction is ADP(in) + ATP(out) = ADP(out) + ATP(in). The matrix-open state (m-state) is inhibited by the membrane-permeable bongkrekic acid (BKA). The cytoplasmic-open state (c-state) is inhibited by the membrane-impermeable toxic inhibitor carboxyatractyloside (CATR). ADP:ATP antiporter that mediates import of ADP into the mitochondrial matrix for ATP synthesis, and export of ATP out to fuel the cell. Cycles between the cytoplasmic-open state (c-state) and the matrix-open state (m-state): operates by the alternating access mechanism with a single substrate-binding site intermittently exposed to either the cytosolic (c-state) or matrix (m-state) side of the inner mitochondrial membrane. This is ADP,ATP carrier protein 2, mitochondrial (ANT2) from Zea mays (Maize).